Reading from the N-terminus, the 78-residue chain is Beta-defensin 29 (78 aa).

An N-terminal signal peptide occupies residues 1 to 23; the sequence is MPVTKPYFVTVAVLLILVDKTTG. Intrachain disulfides connect C40–C67, C47–C61, and C51–C68.

This sequence belongs to the beta-defensin family.

The protein localises to the secreted. Has antibacterial activity. This Rattus norvegicus (Rat) protein is Beta-defensin 29 (Defb29).